The primary structure comprises 55 residues: Caltrin-like protein 2 (55 aa).

The WAP domain occupies 7–55 (AINRPGSCPRVMIYCPARHPPNKCTSDYDCPKPQKCCPGYCGKQCYQPE).

Glycosylated.

Inhibits calcium transport into spermatozoa. This Cavia porcellus (Guinea pig) protein is Caltrin-like protein 2.